We begin with the raw amino-acid sequence, 87 residues long: Large ribosomal subunit protein bL31B (87 aa).

This sequence belongs to the bacterial ribosomal protein bL31 family. Type B subfamily. Part of the 50S ribosomal subunit.

The sequence is that of Large ribosomal subunit protein bL31B from Pseudomonas aeruginosa (strain LESB58).